The chain runs to 122 residues: Ig heavy chain V region M511 (122 aa).

The region spanning 1 to 114 (EVKLVESGGG…SYWYFDVWGA (114 aa)) is the Ig-like domain.

The protein is Ig heavy chain V region M511 of Mus musculus (Mouse).